The following is a 227-amino-acid chain: Germin-like protein 3-5 (227 aa).

The signal sequence occupies residues M1–A29. C36 and C51 are oxidised to a cystine. A Cupin type-1 domain is found at S65–E217. N78 and N81 each carry an N-linked (GlcNAc...) asparagine glycan. Mn(2+) is bound by residues H114, H116, E121, and H163.

The protein belongs to the germin family. In terms of assembly, oligomer (believed to be a pentamer but probably hexamer).

The protein resides in the secreted. Its subcellular location is the extracellular space. It is found in the apoplast. In terms of biological role, may play a role in plant defense. Probably has no oxalate oxidase activity even if the active site is conserved. This is Germin-like protein 3-5 from Oryza sativa subsp. japonica (Rice).